Reading from the N-terminus, the 1700-residue chain is Probable serine/threonine-protein kinase ifkC (1700 aa).

Positions 1–25 are disordered; the sequence is MPPKPKQKAKQPSQQPPPPPPPAAA. Positions 14-23 are enriched in pro residues; it reads QQPPPPPPPA. Positions 74–197 constitute an RWD domain; the sequence is MELEALQAIF…EIAKDFLNEN (124 aa). Residues 454–463 are compositionally biased toward polar residues; that stretch reads GLKKSPSTFE. Positions 454 to 488 are disordered; sequence GLKKSPSTFEYSGEGGGGGVGGGSSQKTINPHQQS. The segment covering 466–477 has biased composition (gly residues); that stretch reads GEGGGGGVGGGS. Residues 479-488 are compositionally biased toward polar residues; the sequence is QKTINPHQQS. The 534-residue stretch at 494-1027 folds into the Protein kinase domain; it reads FEEIQLLGRG…AQQLLQSELM (534 aa). Residues 500 to 508 and K523 contribute to the ATP site; that span reads LGRGGFGQV. Disordered stretches follow at residues 568–639 and 689–760; these read LTND…ENND and GNNT…SSSK. Residues 572–639 show a composition bias toward acidic residues; it reads NSDDDDDDDD…SEFESEENND (68 aa). Residues 697–735 are compositionally biased toward low complexity; it reads SSNQHLQQQQQQNQSQQQKKQPQQNQSQQQKKLKNSNSK. Basic residues predominate over residues 736–752; it reads SKSKSKSKSKSKSKSNS. D822 functions as the Proton acceptor in the catalytic mechanism. 4 stretches are compositionally biased toward low complexity: residues 850-875, 1135-1158, 1230-1240, and 1509-1531; these read TSTL…SSNS, NNSS…NTNS, SSNGNSNNNNS, and NNSN…SYNN. 4 disordered regions span residues 850–901, 1134–1160, 1216–1253, and 1507–1531; these read TSTL…EVEG, FNNS…NSVV, KHHH…SNTT, and NLNN…SYNN.

It belongs to the protein kinase superfamily. Ser/Thr protein kinase family. GCN2 subfamily.

The catalysed reaction is L-seryl-[protein] + ATP = O-phospho-L-seryl-[protein] + ADP + H(+). It catalyses the reaction L-threonyl-[protein] + ATP = O-phospho-L-threonyl-[protein] + ADP + H(+). This Dictyostelium discoideum (Social amoeba) protein is Probable serine/threonine-protein kinase ifkC (ifkC).